Here is a 206-residue protein sequence, read N- to C-terminus: Large ribosomal subunit protein uL4 (206 aa).

The interval 63–97 (MYKQKGTGRARHHSARAPQFRGGGKAHGPVVRSHE) is disordered. A compositionally biased stretch (basic residues) spans 64–77 (YKQKGTGRARHHSA).

Belongs to the universal ribosomal protein uL4 family. As to quaternary structure, part of the 50S ribosomal subunit.

One of the primary rRNA binding proteins, this protein initially binds near the 5'-end of the 23S rRNA. It is important during the early stages of 50S assembly. It makes multiple contacts with different domains of the 23S rRNA in the assembled 50S subunit and ribosome. In terms of biological role, forms part of the polypeptide exit tunnel. The protein is Large ribosomal subunit protein uL4 of Rhizobium johnstonii (strain DSM 114642 / LMG 32736 / 3841) (Rhizobium leguminosarum bv. viciae).